The primary structure comprises 354 residues: Threonine synthase (354 aa).

Position 61 is an N6-(pyridoxal phosphate)lysine (lysine 61). Pyridoxal 5'-phosphate contacts are provided by residues asparagine 87, 187–191 (GNAGN), and threonine 316.

This sequence belongs to the threonine synthase family. It depends on pyridoxal 5'-phosphate as a cofactor.

The catalysed reaction is O-phospho-L-homoserine + H2O = L-threonine + phosphate. The protein operates within amino-acid biosynthesis; L-threonine biosynthesis; L-threonine from L-aspartate: step 5/5. Functionally, catalyzes the gamma-elimination of phosphate from L-phosphohomoserine and the beta-addition of water to produce L-threonine. In Halalkalibacterium halodurans (strain ATCC BAA-125 / DSM 18197 / FERM 7344 / JCM 9153 / C-125) (Bacillus halodurans), this protein is Threonine synthase (thrC).